Here is a 264-residue protein sequence, read N- to C-terminus: Shikimate dehydrogenase (NADP(+)) (264 aa).

Shikimate contacts are provided by residues 14 to 16 (SLS) and Thr59. Lys63 (proton acceptor) is an active-site residue. Glu75 provides a ligand contact to NADP(+). 2 residues coordinate shikimate: Asn84 and Asp99. Residues 122-126 (GAGGA), 144-149 (NRTPSK), and Ile205 each bind NADP(+). Position 207 (Tyr207) interacts with shikimate. NADP(+) is bound at residue Gly228.

It belongs to the shikimate dehydrogenase family. Homodimer.

The enzyme catalyses shikimate + NADP(+) = 3-dehydroshikimate + NADPH + H(+). It participates in metabolic intermediate biosynthesis; chorismate biosynthesis; chorismate from D-erythrose 4-phosphate and phosphoenolpyruvate: step 4/7. Involved in the biosynthesis of the chorismate, which leads to the biosynthesis of aromatic amino acids. Catalyzes the reversible NADPH linked reduction of 3-dehydroshikimate (DHSA) to yield shikimate (SA). This chain is Shikimate dehydrogenase (NADP(+)), found in Pyrococcus abyssi (strain GE5 / Orsay).